Reading from the N-terminus, the 310-residue chain is MESDPNPSAWNQYINPRDCTQGLCSTFCPQWCTYINFSPPPISYEQFLNDGVASNPNLSPLVIAIFGIFATAFLLAAYYTLVSKYCANDTTNEAASESGRSDIILDVNSPERGDQDDPFALESSTAGLDDTLIKKIGFFKLKKHQNGFKINGTDCSICLGEFNEDESLRLLPKCNHTFHVVCIDRWLKSHSNCPLCRAKIIVPTTQQPEHHVVVMNLDRFTSNVGSAEGNVVVDDHREEVSVSISSHHPSWFSAADIVLRISRDGEEEEGNYDLENGNREKLVDLKRSFSSGGLVLGTQGRTRRSLNICP.

A helical membrane pass occupies residues 62-82; the sequence is VIAIFGIFATAFLLAAYYTLV. The RING-type; atypical zinc finger occupies 155 to 197; that stretch reads CSICLGEFNEDESLRLLPKCNHTFHVVCIDRWLKSHSNCPLCR.

This sequence belongs to the RING-type zinc finger family. ATL subfamily.

It localises to the membrane. It carries out the reaction S-ubiquitinyl-[E2 ubiquitin-conjugating enzyme]-L-cysteine + [acceptor protein]-L-lysine = [E2 ubiquitin-conjugating enzyme]-L-cysteine + N(6)-ubiquitinyl-[acceptor protein]-L-lysine.. The protein operates within protein modification; protein ubiquitination. This chain is Putative RING-H2 finger protein ATL53 (ATL53), found in Arabidopsis thaliana (Mouse-ear cress).